Reading from the N-terminus, the 429-residue chain is Citrate synthase, plasmid (429 aa).

Residues histidine 306 and aspartate 364 contribute to the active site.

The protein belongs to the citrate synthase family.

The enzyme catalyses oxaloacetate + acetyl-CoA + H2O = citrate + CoA + H(+). It functions in the pathway carbohydrate metabolism; tricarboxylic acid cycle; isocitrate from oxaloacetate: step 1/2. The exact function of the plasmid-encoded citrate synthase is not clear, it could help nodulation by allowing the bacteria to use citrate as a chelator of iron and calcium. In Rhizobium tropici, this protein is Citrate synthase, plasmid (pcsA).